We begin with the raw amino-acid sequence, 862 residues long: Rab GTPase-binding effector protein 1 (862 aa).

Alanine 2 bears the N-acetylalanine mark. Residues aspartate 11–lysine 345 are a coiled coil. Lysine 282 is modified (N6-acetyllysine). The segment at glutamate 315 to alanine 338 is disordered. 3 positions are modified to phosphoserine: serine 374, serine 377, and serine 407. At threonine 408 the chain carries Phosphothreonine. Phosphoserine is present on serine 410. Residues aspartate 435–serine 447 form an interaction with AP1G1, AP1G2, GGA1, GGA2 and GGA3 region. Residues aspartate 534 to glutamine 816 are a coiled coil.

The protein belongs to the rabaptin family. Homodimer when bound to RAB5A. Heterodimer with RABGEF1. The heterodimer binds RAB4A and RAB5A that have been activated by GTP-binding. Interacts with TSC2. Interacts with GGA1 (via GAE domain), GGA2 (via GAE domain) and GGA3 (via GAE domain). Interacts with AP1G1 (via GAE domain). Interacts with AP1G2 (via GAE domain). Interacts with ECPAS. Interacts with KCNH1. Interacts with PKD1 (via C-terminal domain) and GGA1; the interactions recruit PKD1:PKD2 complex to GGA1 and ARL3 at trans-Golgi network. Post-translationally, proteolytic cleavage by caspases in apoptotic cells causes loss of endosome fusion activity.

The protein resides in the cytoplasm. The protein localises to the early endosome. Its subcellular location is the recycling endosome. It localises to the cytoplasmic vesicle. Its function is as follows. Rab effector protein acting as linker between gamma-adaptin, RAB4A and RAB5A. Involved in endocytic membrane fusion and membrane trafficking of recycling endosomes. Involved in KCNH1 channels trafficking to and from the cell membrane. Stimulates RABGEF1 mediated nucleotide exchange on RAB5A. Mediates the traffic of PKD1:PKD2 complex from the endoplasmic reticulum through the Golgi to the cilium. This is Rab GTPase-binding effector protein 1 (RABEP1) from Homo sapiens (Human).